The sequence spans 418 residues: MSIAEKIRNIAADARQAAIAMAKLSASAKNELLLAMAGSLVRNTVQLIEENRKDLEAGEAKGLSTAMLDRLMLNEARIKAMADGLREVAALSDPVGEVTRMWTRPNGLRVGKMRIPLGVIGIIYEARPNVTADAAALCLKSGNSVILRGGSEAIHSNLAIARILGEELKRAGIPAAALSVVPFPEREGVLEMLKQEEFIDLIIPRGGESLIRFVVENSRIPVIKHYKGVCHVFVDADADFDMAEKIIVNGKVQRPGVCNALETLLVHKDIAETFIPRIAETLIELKVELRGDDCVRQFVPQATKATEDDWHAEYLELILAVRVVDDLDEAVAHINRYGSLHTEAIVTRDYHNAQRFIREVNSSTVLVNASTRFADGNQLGLGAEIGISTTKLHSFGPMGLEDLTTTKFIVYGDGQVRP.

It belongs to the gamma-glutamyl phosphate reductase family.

Its subcellular location is the cytoplasm. The catalysed reaction is L-glutamate 5-semialdehyde + phosphate + NADP(+) = L-glutamyl 5-phosphate + NADPH + H(+). Its pathway is amino-acid biosynthesis; L-proline biosynthesis; L-glutamate 5-semialdehyde from L-glutamate: step 2/2. Functionally, catalyzes the NADPH-dependent reduction of L-glutamate 5-phosphate into L-glutamate 5-semialdehyde and phosphate. The product spontaneously undergoes cyclization to form 1-pyrroline-5-carboxylate. This chain is Gamma-glutamyl phosphate reductase, found in Geobacter sulfurreducens (strain ATCC 51573 / DSM 12127 / PCA).